The primary structure comprises 208 residues: Thymidylate kinase (208 aa).

10–17 (GPDGSGKT) is a binding site for ATP.

Belongs to the thymidylate kinase family.

The enzyme catalyses dTMP + ATP = dTDP + ADP. Functionally, phosphorylation of dTMP to form dTDP in both de novo and salvage pathways of dTTP synthesis. This Listeria monocytogenes serotype 4a (strain HCC23) protein is Thymidylate kinase.